Reading from the N-terminus, the 1078-residue chain is Transmembrane protein 132B (1078 aa).

Residues 1–903 (MFGAASRMDT…LTDLEIGMYA (903 aa)) are Extracellular-facing. 3 N-linked (GlcNAc...) asparagine glycosylation sites follow: Asn-343, Asn-366, and Asn-381. A disordered region spans residues 834 to 887 (RGTPVGQEESTNKSTTPQSPMEGKNKLLKSGGPDAFTSFPTQGKSPDPNNPSDL). The segment covering 841–852 (EESTNKSTTPQS) has biased composition (polar residues). Residues 904 to 924 (LLCVFCLAILVFLINCVAFAW) traverse the membrane as a helical segment. The Cytoplasmic segment spans residues 925-1078 (KYRHKRFAVS…DYMESLQDQM (154 aa)).

Belongs to the TMEM132 family.

It localises to the membrane. The chain is Transmembrane protein 132B (TMEM132B) from Homo sapiens (Human).